Consider the following 225-residue polypeptide: F-box protein SKIP27 (225 aa).

The 49-residue stretch at 121 to 169 (KSRLECLPQDLLIRVICGVDHEDLKSLKLVSKSIREASLVAKTLHFAYT) folds into the F-box domain.

Part of a SCF (ASK-cullin-F-box) protein ligase complex. Interacts with SKP1A/ASK1 and SPK1B/ASK2.

Its subcellular location is the nucleus. Its pathway is protein modification; protein ubiquitination. Its function is as follows. Component of SCF(ASK-cullin-F-box) E3 ubiquitin ligase complexes, which may mediate the ubiquitination and subsequent proteasomal degradation of target proteins. This chain is F-box protein SKIP27 (SKIP27), found in Arabidopsis thaliana (Mouse-ear cress).